The following is a 1312-amino-acid chain: AT-rich interactive domain-containing protein 4B (1312 aa).

Disordered regions lie at residues 124-166 (PLTN…EDDR) and 266-306 (KTEL…EPFP). Phosphoserine is present on residues serine 276, serine 295, and serine 296. Acidic residues predominate over residues 277–305 (EAEEEEEEEDDEKEKEDNSSEEEEEIEPF). Residues 306 to 398 (PEERENFLQQ…YLYGFEEYCR (93 aa)) form the ARID domain. Residues lysine 429, lysine 440, and lysine 462 each participate in a glycyl lysine isopeptide (Lys-Gly) (interchain with G-Cter in SUMO2) cross-link. 5 disordered regions span residues 458 to 577 (EIER…KVQV), 635 to 680 (IKHR…EMVS), 708 to 894 (QASE…TTGF), 909 to 1212 (LNNS…NRLP), and 1252 to 1288 (SEVASIDRRRKRLKKKERESAATSSSSSSPSSSSITA). Residues 465 to 473 (IKPSLGSKK) are antigenic epitope. Serine 483 carries the phosphoserine modification. The segment covering 483–496 (SDQEKEVNIKKPED) has biased composition (basic and acidic residues). Lysine 517 is covalently cross-linked (Glycyl lysine isopeptide (Lys-Gly) (interchain with G-Cter in SUMO2)). Positions 532–567 (NKEEDEDDEEAEEEEEEEEEEEDEDDDDNNEEEEFE) are enriched in acidic residues. A Tudor-knot domain is found at 572 to 624 (GMKVQVRYGRGKNQKMYEASIKDSDVEGGEVLYLVHYCGWNVRYDEWIKADKI). Residues 643–656 (NKLDKEKDKDEKYS) are compositionally biased toward basic and acidic residues. 3 positions are modified to phosphoserine: serine 666, serine 675, and serine 717. Composition is skewed to basic and acidic residues over residues 722–754 (ERGAQDMDNNGKEESKIDHLTNNRNDLISKEEQ) and 778–787 (SPERLRKDIE). The stretch at 728–754 (MDNNGKEESKIDHLTNNRNDLISKEEQ) forms a coiled coil. Residue lysine 751 forms a Glycyl lysine isopeptide (Lys-Gly) (interchain with G-Cter in SUMO2) linkage. Phosphoserine is present on residues serine 778 and serine 790. Positions 788 to 799 (VLSEDTDYEEDE) are enriched in acidic residues. Threonine 793 is subject to Phosphothreonine. Basic and acidic residues-rich tracts occupy residues 807–816 (VKKDTTDKSS), 828–852 (CNTEECLKTGSPGKKEEKAKNKESL), 909–927 (LNNSDERLQNSRAKDRKDV), and 995–1010 (KPIEEKTVEVNDRKAE). A Phosphoserine modification is found at serine 1014. Threonine 1026 carries the post-translational modification Phosphothreonine. Positions 1028–1037 (ESPSSVTVTE) are enriched in low complexity. Serine 1029 carries the post-translational modification Phosphoserine. Residues 1038-1047 (GSRQQSSVTV) show a composition bias toward polar residues. Over residues 1056-1065 (EEVRSIKSET) the composition is skewed to basic and acidic residues. A compositionally biased stretch (low complexity) spans 1087 to 1101 (SSPAGFDASVSSSSS). The interval 1130 to 1137 (KKQKRSHK) is antigenic epitope. The span at 1130-1148 (KKQKRSHKATVVNNKKKGK) shows a compositional bias: basic residues. Threonine 1150 carries the post-translational modification Phosphothreonine. Phosphoserine is present on residues serine 1152, serine 1153, serine 1155, and serine 1159. The segment covering 1162-1191 (ESITKSQPVKSVSTGMKSHSTKSPARTQSP) has biased composition (polar residues). The segment covering 1196–1208 (KNGDKDPDLKEPS) has biased composition (basic and acidic residues). Residues 1231-1270 (ERITILQEKLQEIRKHYLSLKSEVASIDRRRKRLKKKERE) are a coiled coil. The span at 1272-1288 (AATSSSSSSPSSSSITA) shows a compositional bias: low complexity.

In terms of assembly, component of a Sin3A corepressor complex consisting of SIN3A, SAP130, SUDS3/SAP45, SAP180, HDAC1 and HDAC2. Interacts with ARID4A. Interacts with AR. In terms of tissue distribution, highly expressed in the testis and in breast, lung, colon, pancreatic and ovarian cancers. Expressed at low levels in the thymus, prostate and ovary.

The protein resides in the nucleus. It is found in the cytoplasm. Acts as a transcriptional repressor. May function in the assembly and/or enzymatic activity of the Sin3A corepressor complex or in mediating interactions between the complex and other regulatory complexes. Plays a role in the regulation of epigenetic modifications at the PWS/AS imprinting center near the SNRPN promoter, where it might function as part of a complex with RB1 and ARID4A. Involved in spermatogenesis, together with ARID4A, where it functions as a transcriptional coactivator for AR (androgen receptor) and enhances expression of genes required for sperm maturation. Regulates expression of the tight junction protein CLDN3 in the testis, which is important for integrity of the blood-testis barrier. Plays a role in myeloid homeostasis where it regulates the histone methylation state of bone marrow cells and expression of various genes involved in hematopoiesis. May function as a leukemia suppressor. In Homo sapiens (Human), this protein is AT-rich interactive domain-containing protein 4B (ARID4B).